The primary structure comprises 278 residues: Mediator of RNA polymerase II transcription subunit 18 (278 aa).

The protein belongs to the Mediator complex subunit 18 family. In terms of assembly, component of the Mediator complex.

The protein resides in the nucleus. Functionally, component of the Mediator complex, a coactivator involved in the regulated transcription of nearly all RNA polymerase II-dependent genes. Mediator functions as a bridge to convey information from gene-specific regulatory proteins to the basal RNA polymerase II transcription machinery. Mediator is recruited to promoters by direct interactions with regulatory proteins and serves as a scaffold for the assembly of a functional preinitiation complex with RNA polymerase II and the general transcription factors. This is Mediator of RNA polymerase II transcription subunit 18 (srb5) from Aspergillus clavatus (strain ATCC 1007 / CBS 513.65 / DSM 816 / NCTC 3887 / NRRL 1 / QM 1276 / 107).